Reading from the N-terminus, the 619-residue chain is MAAVVQQNDLVFEFASNVMEDERQLGDPAIFPAVIVEHVPGADILNSYAGLACVEEPNDMITESSLDVAEEEIIDDDDDDITLTVEASCHDGDETIETIEAAEALLNMDSPGPMLDEKRINNNIFSSPEDDMVVAPVTHVSVTLDGIPEVMETQQVQEKYADSPGASSPEQPKRKKGRKTKPPRPDSPATTPNISVKKKNKDGKGNTIYLWEFLLALLQDKATCPKYIKWTQREKGIFKLVDSKAVSRLWGKHKNKPDMNYETMGRALRYYYQRGILAKVEGQRLVYQFKEMPKDLIYINDEDPSSSIESSDPSLSSSATSNRNQTSRSRVSSSPGVKGGATTVLKPGNSKAAKPKDPVEVAQPSEVLRTVQPTQSPYPTQLFRTVHVVQPVQAVPEGEAARTSTMQDETLNSSVQSIRTIQAPTQVPVVVSPRNQQLHTVTLQTVPLTTVIASTDPSAGTGSQKFILQAIPSSQPMTVLKENVMLQSQKAGSPPSIVLGPAQVQQVLTSNVQTICNGTVSVASSPSFSATAPVVTFSPRSSQLVAHPPGTVITSVIKTQETKTLTQEVEKKESEDHLKENTEKTEQQPQPYVMVVSSSNGFTSQVAMKQNELLEPNSF.

Ser110, Ser163, Ser167, and Ser168 each carry phosphoserine. Residues Glu158–Lys199 are disordered. Residues Lys173–Pro182 show a composition bias toward basic residues. Phosphoserine is present on Ser187. Position 190 is a phosphothreonine (Thr190). The ETS DNA-binding region spans Ile208 to Lys290. The segment at Asn300–Glu366 is disordered. A compositionally biased stretch (low complexity) spans Ser305–Ser321. Positions Asn322–Pro335 are enriched in polar residues. Residue Ser432 is modified to Phosphoserine. Residues Thr564–Tyr592 are disordered. Residues Glu568–Glu586 show a composition bias toward basic and acidic residues.

This sequence belongs to the ETS family. In terms of assembly, binds to the underphosphorylated form of RB. May interact with other transcription factors in order to regulate specific genes. Interacts with RUNX1. In terms of tissue distribution, in fetal tissues, it is highly expressed in heart, lung liver and kidney, and weakly expressed in brain. In adult, it is highly expressed in pancreas, spleen, thymus and peripheral blood leukocytes, expressed at moderate levels in heart, placenta, lung, liver, skeletal muscle, kidney, prostate, ovary, small intestine and colon, and weakly expressed in brain and testis.

It is found in the nucleus. Its function is as follows. Transcription factor that activates the LYN and BLK promoters. Appears to be required for the T-cell-receptor-mediated trans activation of HIV-2 gene expression. Binds specifically to two purine-rich motifs in the HIV-2 enhancer. This is ETS-related transcription factor Elf-1 (ELF1) from Homo sapiens (Human).